Here is a 331-residue protein sequence, read N- to C-terminus: Sulfate/thiosulfate import ATP-binding protein CysA (331 aa).

The 231-residue stretch at 2 to 232 (ITVTNARKNY…PANEFVMSFL (231 aa)) folds into the ABC transporter domain. 34-41 (GPSGSGKS) serves as a coordination point for ATP.

The protein belongs to the ABC transporter superfamily. Sulfate/tungstate importer (TC 3.A.1.6) family. In terms of assembly, the complex is composed of two ATP-binding proteins (CysA), two transmembrane proteins (CysT and CysW) and a solute-binding protein (CysP).

It is found in the cell membrane. It carries out the reaction sulfate(out) + ATP + H2O = sulfate(in) + ADP + phosphate + H(+). The enzyme catalyses thiosulfate(out) + ATP + H2O = thiosulfate(in) + ADP + phosphate + H(+). Its function is as follows. Part of the ABC transporter complex CysAWTP involved in sulfate/thiosulfate import. Responsible for energy coupling to the transport system. The chain is Sulfate/thiosulfate import ATP-binding protein CysA from Nocardia farcinica (strain IFM 10152).